Reading from the N-terminus, the 238-residue chain is LexA repressor (238 aa).

The H-T-H motif DNA-binding region spans 26 to 46 (FDEMKDALELRSKSGIHRLIS). Residues serine 159 and lysine 197 each act as for autocatalytic cleavage activity in the active site.

This sequence belongs to the peptidase S24 family. As to quaternary structure, homodimer.

It catalyses the reaction Hydrolysis of Ala-|-Gly bond in repressor LexA.. In terms of biological role, represses a number of genes involved in the response to DNA damage (SOS response), including recA and lexA. In the presence of single-stranded DNA, RecA interacts with LexA causing an autocatalytic cleavage which disrupts the DNA-binding part of LexA, leading to derepression of the SOS regulon and eventually DNA repair. This chain is LexA repressor, found in Gluconobacter oxydans (strain 621H) (Gluconobacter suboxydans).